Here is a 367-residue protein sequence, read N- to C-terminus: 2-aminoethylphosphonate--pyruvate transaminase (367 aa).

The residue at position 194 (Lys-194) is an N6-(pyridoxal phosphate)lysine.

It belongs to the class-V pyridoxal-phosphate-dependent aminotransferase family. PhnW subfamily. As to quaternary structure, homodimer. Pyridoxal 5'-phosphate serves as cofactor.

The catalysed reaction is (2-aminoethyl)phosphonate + pyruvate = phosphonoacetaldehyde + L-alanine. Functionally, involved in phosphonate degradation. In Salmonella agona (strain SL483), this protein is 2-aminoethylphosphonate--pyruvate transaminase.